A 234-amino-acid chain; its full sequence is Putative N-acetylmannosamine-6-phosphate 2-epimerase (234 aa).

Belongs to the NanE family.

It carries out the reaction an N-acyl-D-glucosamine 6-phosphate = an N-acyl-D-mannosamine 6-phosphate. The protein operates within amino-sugar metabolism; N-acetylneuraminate degradation; D-fructose 6-phosphate from N-acetylneuraminate: step 3/5. In terms of biological role, converts N-acetylmannosamine-6-phosphate (ManNAc-6-P) to N-acetylglucosamine-6-phosphate (GlcNAc-6-P). This Klebsiella pneumoniae subsp. pneumoniae (strain ATCC 700721 / MGH 78578) protein is Putative N-acetylmannosamine-6-phosphate 2-epimerase.